A 392-amino-acid polypeptide reads, in one-letter code: Succinate--CoA ligase [ADP-forming] subunit beta (392 aa).

Residues 9 to 248 (KGLFRDYGVS…LHEEDPTEVK (240 aa)) form the ATP-grasp domain. Residues Lys-50, 57–59 (GRG), Val-106, and Glu-111 each bind ATP. Mg(2+)-binding residues include Asn-203 and Asp-217. Substrate is bound by residues Asn-268 and 325–327 (GIV).

This sequence belongs to the succinate/malate CoA ligase beta subunit family. As to quaternary structure, heterotetramer of two alpha and two beta subunits. Mg(2+) is required as a cofactor.

The enzyme catalyses succinate + ATP + CoA = succinyl-CoA + ADP + phosphate. It carries out the reaction GTP + succinate + CoA = succinyl-CoA + GDP + phosphate. The protein operates within carbohydrate metabolism; tricarboxylic acid cycle; succinate from succinyl-CoA (ligase route): step 1/1. Functionally, succinyl-CoA synthetase functions in the citric acid cycle (TCA), coupling the hydrolysis of succinyl-CoA to the synthesis of either ATP or GTP and thus represents the only step of substrate-level phosphorylation in the TCA. The beta subunit provides nucleotide specificity of the enzyme and binds the substrate succinate, while the binding sites for coenzyme A and phosphate are found in the alpha subunit. The chain is Succinate--CoA ligase [ADP-forming] subunit beta from Salinibacter ruber (strain DSM 13855 / M31).